The following is a 288-amino-acid chain: Ankyrin repeat and SOCS box protein 8 (288 aa).

Phosphoserine is present on serine 17. 4 ANK repeats span residues 52–81 (GTLKPLHCACMVSDADCVELLLEKGAEVNA), 85–113 (YNRTALHYAAEKDEACVEVLLEYGANPNA), 117–146 (NRDTPLHWAAFKNNAECVRALLESGASVNA), and 150–179 (NNDTPLSWAAMKGNLESVSILLDYGAEVRV). The SOCS box domain occupies 235 to 288 (QLCEKLTVLCSAPGTLKTLARYTVRRSLGLQYLPDAVKGLPLPASLKEYLLLLE).

Belongs to the ankyrin SOCS box (ASB) family. Interacts with TBK1; this interaction promotes TBK1 proteasomal degradation. Phosphorylated by TBK1.

It localises to the cytoplasm. The protein operates within protein modification; protein ubiquitination. May be a substrate-recognition component of a SCF-like ECS (Elongin-Cullin-SOCS-box protein) E3 ubiquitin-protein ligase complex which mediates the ubiquitination and subsequent proteasomal degradation of target proteins. Inhibits IFN-beta production through the IRF3 signaling pathway by targeting TBK1 via 'Lys-48'-linked ubiquitination, leading to its proteasomal degradation. The sequence is that of Ankyrin repeat and SOCS box protein 8 (ASB8) from Pongo abelii (Sumatran orangutan).